The chain runs to 455 residues: Keratin, type I cuticular Ha5 (455 aa).

Residues 1–97 are head; the sequence is MASKCLKAGF…FGEGILTGNE (97 aa). Residues 97–408 form the IF rod domain; the sequence is EKETMQSLND…GLLESEDSKL (312 aa). The interval 98 to 132 is coil 1A; sequence KETMQSLNDRLAGYLEKVRQLEQENASLESRIREW. Positions 133–143 are linker 1; sequence CEQQVPYMCPD. Positions 144–244 are coil 1B; that stretch reads YQSYFRTIEE…HEEEVNSLRC (101 aa). Residues 245–260 are linker 12; sequence QLGDRLNVEVDAAPPV. The coil 2 stretch occupies residues 261–404; that stretch reads DLNRVLEEMR…NTYRGLLESE (144 aa). The segment at 405 to 455 is tail; it reads DSKLPCNPCAPDYSPSKSCLPCLPAASCGPSAARTNCSPRPICVPCPGGRF.

This sequence belongs to the intermediate filament family. In terms of tissue distribution, early expression in the hair follicle, mainly found in supramatricial cells and lowermost cortical cells of the hair bulb.

The protein is Keratin, type I cuticular Ha5 (KRT35) of Homo sapiens (Human).